Here is a 160-residue protein sequence, read N- to C-terminus: Cyclic pyranopterin monophosphate synthase (160 aa).

Residues 74–76 (LSH) and 112–113 (ME) each bind substrate. Aspartate 127 is a catalytic residue.

Belongs to the MoaC family. As to quaternary structure, homohexamer; trimer of dimers.

It catalyses the reaction (8S)-3',8-cyclo-7,8-dihydroguanosine 5'-triphosphate = cyclic pyranopterin phosphate + diphosphate. The protein operates within cofactor biosynthesis; molybdopterin biosynthesis. Functionally, catalyzes the conversion of (8S)-3',8-cyclo-7,8-dihydroguanosine 5'-triphosphate to cyclic pyranopterin monophosphate (cPMP). The protein is Cyclic pyranopterin monophosphate synthase of Geotalea uraniireducens (strain Rf4) (Geobacter uraniireducens).